The sequence spans 88 residues: Low calcium response locus protein S (88 aa).

It belongs to the transposase 8 family.

This chain is Low calcium response locus protein S (lcrS), found in Yersinia pestis.